The sequence spans 323 residues: Ferrochelatase (323 aa).

Residues histidine 195 and glutamate 276 each contribute to the Fe cation site.

Belongs to the ferrochelatase family.

It is found in the cytoplasm. The enzyme catalyses heme b + 2 H(+) = protoporphyrin IX + Fe(2+). The protein operates within porphyrin-containing compound metabolism; protoheme biosynthesis; protoheme from protoporphyrin-IX: step 1/1. Functionally, catalyzes the ferrous insertion into protoporphyrin IX. The polypeptide is Ferrochelatase (Mannheimia succiniciproducens (strain KCTC 0769BP / MBEL55E)).